Consider the following 219-residue polypeptide: Putative germin-like protein 8-1 (219 aa).

A signal peptide spans 1-23 (MASFISFLLLAALIGMASWQAIA). Cysteine 33 and cysteine 48 are disulfide-bonded. Asparagine 53 and asparagine 79 each carry an N-linked (GlcNAc...) asparagine glycan. One can recognise a Cupin type-1 domain in the interval 63-215 (AMLDKPRDTA…AFQVDKKIID (153 aa)). 4 residues coordinate Mn(2+): histidine 112, histidine 114, glutamate 119, and histidine 160.

Belongs to the germin family. As to quaternary structure, oligomer (believed to be a pentamer but probably hexamer).

The protein resides in the secreted. Its subcellular location is the extracellular space. The protein localises to the apoplast. In terms of biological role, plays a role in broad-spectrum disease resistance. Probably has no oxalate oxidase activity even if the active site is conserved. The protein is Putative germin-like protein 8-1 of Oryza sativa subsp. japonica (Rice).